We begin with the raw amino-acid sequence, 273 residues long: Putative pyruvate, phosphate dikinase regulatory protein (273 aa).

149 to 156 (GPSRTSKT) is an ADP binding site.

The protein belongs to the pyruvate, phosphate/water dikinase regulatory protein family. PDRP subfamily.

The enzyme catalyses N(tele)-phospho-L-histidyl/L-threonyl-[pyruvate, phosphate dikinase] + ADP = N(tele)-phospho-L-histidyl/O-phospho-L-threonyl-[pyruvate, phosphate dikinase] + AMP + H(+). The catalysed reaction is N(tele)-phospho-L-histidyl/O-phospho-L-threonyl-[pyruvate, phosphate dikinase] + phosphate + H(+) = N(tele)-phospho-L-histidyl/L-threonyl-[pyruvate, phosphate dikinase] + diphosphate. Functionally, bifunctional serine/threonine kinase and phosphorylase involved in the regulation of the pyruvate, phosphate dikinase (PPDK) by catalyzing its phosphorylation/dephosphorylation. The protein is Putative pyruvate, phosphate dikinase regulatory protein of Rickettsia felis (strain ATCC VR-1525 / URRWXCal2) (Rickettsia azadi).